The following is a 463-amino-acid chain: MTHKPCLLYSQLPAIDRLLREPQITPLVEQYGQTLVTATLRRMQEQARINIKQYQALPDWCDNWASALGQQLEQKQALALKPVFNLSGTVIHTNLGRALMAESAIEAVTQVMRSPVTLEYSLNNAERGHRDHALADLLCELTGAEDACIVNNNAAAVLLLLATVASGKQVVVSRGELVEIGGAFRIPDVMVQAGCRLVEVGTTNRTHLKDYRQAINEETALLMKVHTSNYNIDGFTAEVSGRELATLGIASQIPTAIDLGSGSMINMVQYGLPAEPMPQDYLNQGIDLVTFSGDKLLGGPQAGIILGKKHWIEAIQRHPLKRALRADKMTLAALEATLRLYQRPEQLCQQLPTLRLLTRSQQQMHDMAQRLLPQLQAHYGDQFIVRDEPCYSQIGSGSLPVDRLPSWALTFAAVEGQGSSLERLARCWRGLAKPVLGRISGGRLWLDLRCLEDEKALLQALLL.

N6-(pyridoxal phosphate)lysine is present on lysine 295.

The protein belongs to the SelA family. Homodecamer; pentamer of dimers. Binds only one seryl-tRNA(Sec) per dimer. Pyridoxal 5'-phosphate serves as cofactor.

It localises to the cytoplasm. It carries out the reaction L-seryl-tRNA(Sec) + selenophosphate + H(+) = L-selenocysteinyl-tRNA(Sec) + phosphate. The protein operates within aminoacyl-tRNA biosynthesis; selenocysteinyl-tRNA(Sec) biosynthesis; selenocysteinyl-tRNA(Sec) from L-seryl-tRNA(Sec) (bacterial route): step 1/1. Converts seryl-tRNA(Sec) to selenocysteinyl-tRNA(Sec) required for selenoprotein biosynthesis. This chain is L-seryl-tRNA(Sec) selenium transferase, found in Photorhabdus laumondii subsp. laumondii (strain DSM 15139 / CIP 105565 / TT01) (Photorhabdus luminescens subsp. laumondii).